A 1033-amino-acid polypeptide reads, in one-letter code: E3 ubiquitin-protein ligase Topors (1033 aa).

Positions 1–10 (MGSQPPPPGS) are enriched in pro residues. The interval 1–36 (MGSQPPPPGSPLSREEGEAPPLVPAEEGRRRSRRVR) is disordered. Positions 52–376 (ELASNGPAVP…MAAFDQHANY (325 aa)) are required for DNA-binding. Glycyl lysine isopeptide (Lys-Gly) (interchain with G-Cter in SUMO2) cross-links involve residues lysine 74, lysine 77, lysine 84, and lysine 89. Serine 99 carries the phosphoserine modification. The RING-type zinc-finger motif lies at 104–143 (CPICLDRFDNVSYLDRCLHKFCFRCVQEWSKNKAECPLCK). Lysine 160 participates in a covalent cross-link: Glycyl lysine isopeptide (Lys-Gly) (interchain with G-Cter in SUMO2). Serine 196 carries the phosphoserine modification. Lysine 251 participates in a covalent cross-link: Glycyl lysine isopeptide (Lys-Gly) (interchain with G-Cter in SUMO2). 2 disordered regions span residues 414 to 477 (QAPW…SSSD) and 496 to 692 (VELS…RYYL). Residues 434–444 (VGVSSLLNSSD) show a composition bias toward low complexity. Positions 438–574 (SLLNSSDSSD…RSTSLPAPRD (137 aa)) are sumoylation and localization to discrete nuclear foci. The interaction with SUMO1 stretch occupies residues 438 to 654 (SLLNSSDSSD…RSRTRDSSWS (217 aa)). Positions 455-464 (TTSQIQGVQT) are enriched in polar residues. Residues 457-731 (SQIQGVQTND…RRTLSRAHYS (275 aa)) form an interaction with p53/TP53 region. The segment at 457 to 879 (SQIQGVQTND…GKATDTSKHH (423 aa)) is interaction with TOP1. Low complexity predominate over residues 465 to 477 (NDDVNNDSDSSSD). Serine 500 is subject to Phosphoserine. Residues 507–518 (PYEKVETVKTQE) are compositionally biased toward basic and acidic residues. A compositionally biased stretch (low complexity) spans 522–535 (SYSSGDSDVSRASS). Positions 540-566 (LGKDEQMSKSHCDSDTRISSKKEEKRS) are enriched in basic and acidic residues. A Glycyl lysine isopeptide (Lys-Gly) (interchain with G-Cter in SUMO) cross-link involves residue lysine 561. Serine 585 is subject to Phosphoserine. Composition is skewed to basic residues over residues 613–629 (RNHR…KRSR) and 637–647 (PRARKDKKRSR). Over residues 654 to 669 (SRRSQTLSLSSGSTSR) the composition is skewed to low complexity. Lysine 701 participates in a covalent cross-link: Glycyl lysine isopeptide (Lys-Gly) (interchain with G-Cter in SUMO2). 2 disordered regions span residues 713–934 (RDGY…PIQD) and 970–1033 (TVEN…CDVS). Phosphoserine; by PLK1 is present on serine 718. A compositionally biased stretch (basic residues) spans 721–730 (RRRTLSRAHY). The segment covering 731–747 (SRQSSSPEFRIQSFSER) has biased composition (polar residues). Residue serine 734 is modified to Phosphoserine. A compositionally biased stretch (low complexity) spans 770–780 (SVSSNRSRTTS). Positions 815 to 837 (FTSKGKDSHYQKSKLDGSYKNES) are enriched in basic and acidic residues. Residues lysine 818 and lysine 834 each participate in a glycyl lysine isopeptide (Lys-Gly) (interchain with G-Cter in SUMO2) cross-link. The span at 851–860 (KHKRRRRRTR) shows a compositional bias: basic residues. An interaction with UBE2I region spans residues 851 to 914 (KHKRRRRRTR…ITIDSDSDGE (64 aa)). 2 positions are modified to phosphoserine: serine 861 and serine 863. Positions 877 to 894 (KHHKKKKKKHKKKHKKHH) are enriched in basic residues. Serine 909, serine 911, serine 999, serine 1016, and serine 1025 each carry phosphoserine. The segment covering 992-1008 (TFASDLESQSSNVSIQA) has biased composition (polar residues).

In terms of assembly, interacts with TOP1. Interacts with the SUMO1 conjugating enzyme UBE2I. Interacts with SUMO1. Interacts with NKX3-1; polyubiquitinates NKX3-1 and induces its proteasomal degradation. Interacts with SIN3A; sumoylates SIN3A. Interacts with IKBKE; induced by DNA damage. Interacts with p53/TP53. Interacts with PARK7/DJ-1. Post-translationally, phosphorylation at Ser-99 regulates the E3 ubiquitin-protein ligase activity but not the SUMO1-protein ligase activity. Phosphorylation at Ser-718 increases the E3 ubiquitin-protein ligase activity versus the E3 SUMO1-protein ligase activity resulting in increased p53/TP53 ubiquitination and degradation. In terms of processing, sumoylated.

The protein localises to the nucleus. It localises to the PML body. It catalyses the reaction S-ubiquitinyl-[E2 ubiquitin-conjugating enzyme]-L-cysteine + [acceptor protein]-L-lysine = [E2 ubiquitin-conjugating enzyme]-L-cysteine + N(6)-ubiquitinyl-[acceptor protein]-L-lysine.. Its function is as follows. Functions as an E3 ubiquitin-protein ligase and as a E3 SUMO1-protein ligase. Probable tumor suppressor involved in cell growth, cell proliferation and apoptosis that regulates p53/TP53 stability through ubiquitin-dependent degradation. May regulate chromatin modification through sumoylation of several chromatin modification-associated proteins. May be involved in DNA-damage-induced cell death through IKBKE sumoylation. This chain is E3 ubiquitin-protein ligase Topors (Topors), found in Mus musculus (Mouse).